Reading from the N-terminus, the 470-residue chain is Uronate isomerase (470 aa).

It belongs to the metallo-dependent hydrolases superfamily. Uronate isomerase family.

The catalysed reaction is D-glucuronate = D-fructuronate. It catalyses the reaction aldehydo-D-galacturonate = keto-D-tagaturonate. It functions in the pathway carbohydrate metabolism; pentose and glucuronate interconversion. The sequence is that of Uronate isomerase from Salmonella typhi.